A 230-amino-acid polypeptide reads, in one-letter code: Orotidine 5'-phosphate decarboxylase (230 aa).

Residues Asp10, Lys32, 59 to 68 (DLKYHDIPNT), Thr119, Arg180, Gln189, Gly209, and Arg210 each bind substrate. Lys61 serves as the catalytic Proton donor.

This sequence belongs to the OMP decarboxylase family. Type 1 subfamily. In terms of assembly, homodimer.

It catalyses the reaction orotidine 5'-phosphate + H(+) = UMP + CO2. It functions in the pathway pyrimidine metabolism; UMP biosynthesis via de novo pathway; UMP from orotate: step 2/2. Functionally, catalyzes the decarboxylation of orotidine 5'-monophosphate (OMP) to uridine 5'-monophosphate (UMP). The sequence is that of Orotidine 5'-phosphate decarboxylase from Haemophilus influenzae (strain ATCC 51907 / DSM 11121 / KW20 / Rd).